The primary structure comprises 626 residues: tRNA uridine 5-carboxymethylaminomethyl modification enzyme MnmG (626 aa).

An FAD-binding site is contributed by 13–18 (GGGHAG). 273 to 287 (GPRYCPSIEDKIHRF) is a binding site for NAD(+).

The protein belongs to the MnmG family. In terms of assembly, homodimer. Heterotetramer of two MnmE and two MnmG subunits. Requires FAD as cofactor.

The protein resides in the cytoplasm. In terms of biological role, NAD-binding protein involved in the addition of a carboxymethylaminomethyl (cmnm) group at the wobble position (U34) of certain tRNAs, forming tRNA-cmnm(5)s(2)U34. This is tRNA uridine 5-carboxymethylaminomethyl modification enzyme MnmG from Acinetobacter baumannii (strain SDF).